Consider the following 83-residue polypeptide: Small ribosomal subunit protein bS20 (83 aa).

The segment at 60–83 (ASKGLIHKNKASRDKSRLAAKLAN) is disordered.

Belongs to the bacterial ribosomal protein bS20 family.

Functionally, binds directly to 16S ribosomal RNA. The sequence is that of Small ribosomal subunit protein bS20 from Streptococcus thermophilus (strain CNRZ 1066).